The primary structure comprises 388 residues: UDP-galactose transporter senju (388 aa).

The next 10 membrane-spanning stretches (helical) occupy residues 13 to 33 (LTFV…IFVT), 46 to 66 (TVTV…CLYC), 84 to 104 (VLGL…LAFV), 113 to 133 (TYYL…QIIF), 142 to 162 (WISL…FGSF), 202 to 222 (FSLS…AGVY), 236 to 256 (IFVQ…VILL), 276 to 296 (FSVL…SFFL), 309 to 329 (ALEL…PIYM), and 331 to 351 (TALA…SPVV).

The protein belongs to the nucleotide-sugar transporter family.

It localises to the golgi apparatus membrane. UDP-galactose transporter involved in the synthesis of galactose-containing glycans. Plays a role in quiescence of the innate immune response, possibly by regulating glycosylation of the Toll pathway ligand spz. This Drosophila melanogaster (Fruit fly) protein is UDP-galactose transporter senju.